Reading from the N-terminus, the 97-residue chain is Large ribosomal subunit protein bL25 (97 aa).

Belongs to the bacterial ribosomal protein bL25 family. Part of the 50S ribosomal subunit; part of the 5S rRNA/L5/L18/L25 subcomplex. Contacts the 5S rRNA. Binds to the 5S rRNA independently of L5 and L18.

Its function is as follows. This is one of the proteins that binds to the 5S RNA in the ribosome where it forms part of the central protuberance. This Blochmanniella pennsylvanica (strain BPEN) protein is Large ribosomal subunit protein bL25.